Consider the following 347-residue polypeptide: UDP-N-acetylenolpyruvoylglucosamine reductase (347 aa).

One can recognise an FAD-binding PCMH-type domain in the interval 24 to 195 (FDARARVAAR…VAVTFRLPKA (172 aa)). The active site involves R171. S247 (proton donor) is an active-site residue. E343 is an active-site residue.

The protein belongs to the MurB family. It depends on FAD as a cofactor.

It localises to the cytoplasm. It catalyses the reaction UDP-N-acetyl-alpha-D-muramate + NADP(+) = UDP-N-acetyl-3-O-(1-carboxyvinyl)-alpha-D-glucosamine + NADPH + H(+). It functions in the pathway cell wall biogenesis; peptidoglycan biosynthesis. In terms of biological role, cell wall formation. In Burkholderia mallei (strain NCTC 10247), this protein is UDP-N-acetylenolpyruvoylglucosamine reductase.